A 225-amino-acid polypeptide reads, in one-letter code: MSFIDPRTYIPSNSTESQILKFTFIVCVPICVILIVLLVLYIMRRNSNTNVDWSSLGGFVPTNNNLSTAELGLSKDIREMLPIVIYKESFTVNDTQCSVCLGDYQAEEKLQQMPSCGHTFHMECIDLWLTSHTTCPLCRLSLIPKPSVDLSHQSIEIVSSIENTNGGEASTQPDSQSATEAIIHIDDVEEGNRDSIEVVKESEENDRNSVGTSDGCCSCRLGEKA.

A helical transmembrane segment spans residues 22-42 (FTFIVCVPICVILIVLLVLYI). An RING-type; atypical zinc finger spans residues 97-139 (CSVCLGDYQAEEKLQQMPSCGHTFHMECIDLWLTSHTTCPLCR).

This sequence belongs to the RING-type zinc finger family. ATL subfamily.

It is found in the membrane. The enzyme catalyses S-ubiquitinyl-[E2 ubiquitin-conjugating enzyme]-L-cysteine + [acceptor protein]-L-lysine = [E2 ubiquitin-conjugating enzyme]-L-cysteine + N(6)-ubiquitinyl-[acceptor protein]-L-lysine.. It participates in protein modification; protein ubiquitination. E3 ubiquitin-protein ligase able to catalyze polyubiquitination with ubiquitin-conjugating enzyme E2 UBC8, UBC10, UBC11, and UBC34 in vitro. The protein is E3 ubiquitin-protein ligase ATL59 (ATL59) of Arabidopsis thaliana (Mouse-ear cress).